We begin with the raw amino-acid sequence, 240 residues long: Citrate synthase-lysine N-methyltransferase CSKMT, mitochondrial (240 aa).

Residues 1-21 constitute a mitochondrion transit peptide; the sequence is MAALRRMLHLPRLTMGTCRPF.

Belongs to the methyltransferase superfamily.

It is found in the mitochondrion. It carries out the reaction L-lysyl-[citrate synthase] + S-adenosyl-L-methionine = N(6)-methyl-L-lysyl-[citrate synthase] + S-adenosyl-L-homocysteine + H(+). The catalysed reaction is N(6)-methyl-L-lysyl-[citrate synthase] + S-adenosyl-L-methionine = N(6),N(6)-dimethyl-L-lysyl-[citrate synthase] + S-adenosyl-L-homocysteine + H(+). It catalyses the reaction N(6),N(6)-dimethyl-L-lysyl-[citrate synthase] + S-adenosyl-L-methionine = N(6),N(6),N(6)-trimethyl-L-lysyl-[citrate synthase] + S-adenosyl-L-homocysteine + H(+). Citrate synthase-lysine methyltransferase activity is inhibited by S-adenosylhomocysteine (AdoHcy) and oxaloacetate (OAA). Functionally, protein-lysine methyltransferase that selectively trimethylates citrate synthase (CS) in mitochondria. Seems to conduct trimethylation in a highly distributive manner rather than in a processive manner, and thus introduces a single methyl group per binding event. In Pongo abelii (Sumatran orangutan), this protein is Citrate synthase-lysine N-methyltransferase CSKMT, mitochondrial.